A 456-amino-acid polypeptide reads, in one-letter code: Probable glycine dehydrogenase (decarboxylating) subunit 1 (456 aa).

It belongs to the GcvP family. N-terminal subunit subfamily. In terms of assembly, the glycine cleavage system is composed of four proteins: P, T, L and H. In this organism, the P 'protein' is a heterodimer of two subunits.

The catalysed reaction is N(6)-[(R)-lipoyl]-L-lysyl-[glycine-cleavage complex H protein] + glycine + H(+) = N(6)-[(R)-S(8)-aminomethyldihydrolipoyl]-L-lysyl-[glycine-cleavage complex H protein] + CO2. Functionally, the glycine cleavage system catalyzes the degradation of glycine. The P protein binds the alpha-amino group of glycine through its pyridoxal phosphate cofactor; CO(2) is released and the remaining methylamine moiety is then transferred to the lipoamide cofactor of the H protein. The sequence is that of Probable glycine dehydrogenase (decarboxylating) subunit 1 from Rhizorhabdus wittichii (strain DSM 6014 / CCUG 31198 / JCM 15750 / NBRC 105917 / EY 4224 / RW1) (Sphingomonas wittichii).